The sequence spans 443 residues: Acyl transferase 10 (443 aa).

Catalysis depends on proton acceptor residues His182 and Asp386.

It belongs to the plant acyltransferase family.

In terms of biological role, involved in the incorporation of ferulate into the cell wall. May act as arabinoxylan feruloyl transferase. May function as p-coumaroyl-CoA transferase involved in glucuronoarabinoxylan modification. The sequence is that of Acyl transferase 10 from Oryza sativa subsp. japonica (Rice).